An 806-amino-acid polypeptide reads, in one-letter code: mRNA 3'-end-processing protein RNA14 (806 aa).

A disordered region spans residues 1 to 187 (MSDDYDPTAV…SGPDNNKRKR (187 aa)). 2 stretches are compositionally biased toward basic and acidic residues: residues 33–43 (AAAKDPAHNEE) and 60–107 (QGDE…KPEN). Positions 108 to 118 (PSEEVAEDDDY) are enriched in acidic residues. Residues 132-142 (AGGGSVGGTGI) are compositionally biased toward gly residues. Residues 170–181 (SSTSNNNNSGPD) are compositionally biased toward low complexity. 5 HAT repeats span residues 221–253 (EKLDESRDIYERFLALYPLSAEIWIEYITLEMD), 255–286 (GEFKRLEQLFGRCLTRLPNLKLWNIYLTYVRR), 299–334 (EARTNIIKAFEFYLDHVGIDRESGNVWFEYLDFIKS), 345–378 (QKNDLTRKIYRKAIGIPLNNLSILWTAYTNFEYS), and 404–440 (VLENLMRGLDRSSVPKSGPRDEFQVRAWKKWIDWEKS). The interval 729–770 (KPKSRTDEDSDSERPSKRARRTSHGNDQGDKMEPFNLPQKID) is disordered. Residues 732–744 (SRTDEDSDSERPS) show a composition bias toward basic and acidic residues.

The protein resides in the nucleus. It is found in the cytoplasm. Its function is as follows. Component of the cleavage factor IA (CFIA) complex, which is involved in the endonucleolytic cleavage during polyadenylation-dependent pre-mRNA 3'-end formation. This Yarrowia lipolytica (strain CLIB 122 / E 150) (Yeast) protein is mRNA 3'-end-processing protein RNA14 (RNA14).